The primary structure comprises 380 residues: Erythronate-4-phosphate dehydrogenase (380 aa).

Substrate is bound by residues Ser-45 and Thr-66. NAD(+) is bound by residues 126-127, Asp-146, Thr-175, 206-208, and Asp-232; these read QV and ASR. Residue Arg-208 is part of the active site. Glu-237 is a catalytic residue. His-254 functions as the Proton donor in the catalytic mechanism. Residue Gly-257 participates in NAD(+) binding. Tyr-258 lines the substrate pocket.

This sequence belongs to the D-isomer specific 2-hydroxyacid dehydrogenase family. PdxB subfamily. As to quaternary structure, homodimer.

It localises to the cytoplasm. The catalysed reaction is 4-phospho-D-erythronate + NAD(+) = (R)-3-hydroxy-2-oxo-4-phosphooxybutanoate + NADH + H(+). It participates in cofactor biosynthesis; pyridoxine 5'-phosphate biosynthesis; pyridoxine 5'-phosphate from D-erythrose 4-phosphate: step 2/5. Its function is as follows. Catalyzes the oxidation of erythronate-4-phosphate to 3-hydroxy-2-oxo-4-phosphonooxybutanoate. The polypeptide is Erythronate-4-phosphate dehydrogenase (Pseudomonas paraeruginosa (strain DSM 24068 / PA7) (Pseudomonas aeruginosa (strain PA7))).